The following is a 493-amino-acid chain: Arginine decarboxylase (493 aa).

The residue at position 229 (Lys229) is an N6-(pyridoxal phosphate)lysine.

This sequence belongs to the Orn/Lys/Arg decarboxylase class-I family. Pyridoxal 5'-phosphate is required as a cofactor.

Its subcellular location is the cytoplasm. The catalysed reaction is L-arginine + H(+) = agmatine + CO2. It participates in amine and polyamine biosynthesis; agmatine biosynthesis; agmatine from L-arginine: step 1/1. Its function is as follows. Catalyzes the formation of agmatine from arginine. In Bacillus anthracis, this protein is Arginine decarboxylase (speA).